The following is a 281-amino-acid chain: NAD kinase (281 aa).

Catalysis depends on aspartate 61, which acts as the Proton acceptor. Residues 61 to 62, 134 to 135, arginine 145, aspartate 164, 175 to 180, and glutamine 234 each bind NAD(+); these read DG, ND, and TAYSLS.

It belongs to the NAD kinase family. A divalent metal cation is required as a cofactor.

The protein resides in the cytoplasm. It catalyses the reaction NAD(+) + ATP = ADP + NADP(+) + H(+). In terms of biological role, involved in the regulation of the intracellular balance of NAD and NADP, and is a key enzyme in the biosynthesis of NADP. Catalyzes specifically the phosphorylation on 2'-hydroxyl of the adenosine moiety of NAD to yield NADP. The sequence is that of NAD kinase from Clostridium botulinum (strain ATCC 19397 / Type A).